The chain runs to 65 residues: Conotoxin Am6.4 (65 aa).

The tract at residues Ser-1–Asn-33 is disordered. Positions Ser-1–Arg-36 are excised as a propeptide. Positions Asp-14–Asp-26 are enriched in acidic residues. Disulfide bonds link Cys-40-Cys-50, Cys-45-Cys-59, and Cys-49-Cys-64.

In terms of processing, is not hydroxylated. Expressed by the venom duct.

The protein resides in the secreted. In terms of biological role, probable toxin that inhibits ion channels. The sequence is that of Conotoxin Am6.4 from Conus amadis (Amadis cone).